Consider the following 89-residue polypeptide: Small ribosomal subunit protein bS20 (89 aa).

Residues 1–12 are compositionally biased toward basic residues; that stretch reads MANIKSAKKRAK. Residues 1 to 24 are disordered; it reads MANIKSAKKRAKQTVVRNERNTGQ.

This sequence belongs to the bacterial ribosomal protein bS20 family.

Binds directly to 16S ribosomal RNA. The sequence is that of Small ribosomal subunit protein bS20 from Xanthomonas campestris pv. campestris (strain 8004).